Reading from the N-terminus, the 184-residue chain is MGLLTVLKKLKQKEKELRILMLGLDNAGKTTILKKFNGEDISTISPTLGFNIQTLMYKEYKLNIWDIGGQKTLRSYWRNYYEENDAVIWVIDSSDIRRIDDCKFELKKLLEEEKFAGASFLVFANKQDLDGAMTSEEISKYLDLEQLNTHHWEIMSCSAVTGLGLEEGIDWVVKDIVSRCFVLD.

Glycine 2 is lipidated: N-myristoyl glycine. Residues 23 to 30 (GLDNAGKT), 66 to 70 (DIGGQ), and 125 to 128 (NKQD) contribute to the GTP site.

It belongs to the small GTPase superfamily. Arf family.

Its function is as follows. May be involved in trafficking events within the endosomal system. The polypeptide is ADP-ribosylation factor-like protein 2 (arl2) (Dictyostelium discoideum (Social amoeba)).